Reading from the N-terminus, the 302-residue chain is Putative S-adenosyl-L-methionine-dependent methyltransferase MAV_2803 (302 aa).

Residues Asp129 and 158-159 contribute to the S-adenosyl-L-methionine site; that span reads DL.

This sequence belongs to the UPF0677 family.

Exhibits S-adenosyl-L-methionine-dependent methyltransferase activity. The polypeptide is Putative S-adenosyl-L-methionine-dependent methyltransferase MAV_2803 (Mycobacterium avium (strain 104)).